Consider the following 229-residue polypeptide: ATP synthase subunit a (229 aa).

7 helical membrane-spanning segments follow: residues 24–44, 45–65, 83–103, 117–137, 143–163, 177–199, and 206–228; these read RLCFIVYFNCLMLIFDFLLFC, LFDLYLFVGLCLFLLLWFMLF, LLFCIVFLLYIAFLFLFCFLC, FMDVFFIRFLLCFLECFSLLC, FLRLFCNLLSSHFLLLMFFDF, CYFILFIFVFCFCLLFYVFLYLL, and LQLFIFCNMILQLIMDFLLFLLF.

This sequence belongs to the ATPase A chain family. As to quaternary structure, F-type ATPases have 2 components, CF(1) - the catalytic core - and CF(0) - the membrane proton channel. CF(1) has five subunits: alpha(3), beta(3), gamma(1), delta(1), epsilon(1). CF(0) has three main subunits: a, b and c.

It is found in the mitochondrion inner membrane. Functionally, mitochondrial membrane ATP synthase (F(1)F(0) ATP synthase or Complex V) produces ATP from ADP in the presence of a proton gradient across the membrane which is generated by electron transport complexes of the respiratory chain. F-type ATPases consist of two structural domains, F(1) - containing the extramembraneous catalytic core and F(0) - containing the membrane proton channel, linked together by a central stalk and a peripheral stalk. During catalysis, ATP synthesis in the catalytic domain of F(1) is coupled via a rotary mechanism of the central stalk subunits to proton translocation. Key component of the proton channel; it may play a direct role in the translocation of protons across the membrane. This Trypanosoma brucei brucei protein is ATP synthase subunit a (ATP6).